We begin with the raw amino-acid sequence, 287 residues long: Sulfofructosephosphate aldolase (287 aa).

The active-site Proton donor is Asp-82. 2 residues coordinate Zn(2+): His-83 and His-180. Position 181 (Gly-181) interacts with dihydroxyacetone phosphate. A Zn(2+)-binding site is contributed by His-208. Dihydroxyacetone phosphate-binding positions include 209–211 (GGS) and 230–233 (NVDT).

It belongs to the class II fructose-bisphosphate aldolase family. It depends on Zn(2+) as a cofactor.

The catalysed reaction is 6-deoxy-6-sulfo-D-fructose 1-phosphate = (2S)-3-sulfolactaldehyde + dihydroxyacetone phosphate. Part of the sulfo-EMP2 pathway, a D-sulfoquinovose degradation pathway that produces sulfolactate (SL). Cleaves 6-deoxy-6-sulfo-D-fructose 1-phosphate (SFP) to form dihydroxyacetone phosphate (DHAP) and 3-sulfolactaldehyde (SLA). The polypeptide is Sulfofructosephosphate aldolase (Alkalicoccus urumqiensis (Bacillus urumqiensis)).